We begin with the raw amino-acid sequence, 79 residues long: UPF0181 protein PC1_1931 (79 aa).

The tract at residues 54–79 (FDEDDDTVNDSDEEHYFDDGEEEDEQ) is disordered.

This sequence belongs to the UPF0181 family.

The sequence is that of UPF0181 protein PC1_1931 from Pectobacterium carotovorum subsp. carotovorum (strain PC1).